A 204-amino-acid polypeptide reads, in one-letter code: Urease accessory protein UreG (204 aa).

12–19 (GPVGSGKT) lines the GTP pocket.

The protein belongs to the SIMIBI class G3E GTPase family. UreG subfamily. In terms of assembly, homodimer. UreD, UreF and UreG form a complex that acts as a GTP-hydrolysis-dependent molecular chaperone, activating the urease apoprotein by helping to assemble the nickel containing metallocenter of UreC. The UreE protein probably delivers the nickel.

It localises to the cytoplasm. Facilitates the functional incorporation of the urease nickel metallocenter. This process requires GTP hydrolysis, probably effectuated by UreG. The chain is Urease accessory protein UreG from Hahella chejuensis (strain KCTC 2396).